The primary structure comprises 357 residues: UDP-N-acetylglucosamine--N-acetylmuramyl-(pentapeptide) pyrophosphoryl-undecaprenol N-acetylglucosamine transferase (357 aa).

UDP-N-acetyl-alpha-D-glucosamine-binding positions include Ser13 to Gly15, Arg166, Ser196, and Gln291.

Belongs to the glycosyltransferase 28 family. MurG subfamily.

It localises to the cell membrane. The enzyme catalyses di-trans,octa-cis-undecaprenyl diphospho-N-acetyl-alpha-D-muramoyl-L-alanyl-D-glutamyl-meso-2,6-diaminopimeloyl-D-alanyl-D-alanine + UDP-N-acetyl-alpha-D-glucosamine = di-trans,octa-cis-undecaprenyl diphospho-[N-acetyl-alpha-D-glucosaminyl-(1-&gt;4)]-N-acetyl-alpha-D-muramoyl-L-alanyl-D-glutamyl-meso-2,6-diaminopimeloyl-D-alanyl-D-alanine + UDP + H(+). It functions in the pathway cell wall biogenesis; peptidoglycan biosynthesis. Functionally, cell wall formation. Catalyzes the transfer of a GlcNAc subunit on undecaprenyl-pyrophosphoryl-MurNAc-pentapeptide (lipid intermediate I) to form undecaprenyl-pyrophosphoryl-MurNAc-(pentapeptide)GlcNAc (lipid intermediate II). The chain is UDP-N-acetylglucosamine--N-acetylmuramyl-(pentapeptide) pyrophosphoryl-undecaprenol N-acetylglucosamine transferase from Clostridium perfringens (strain ATCC 13124 / DSM 756 / JCM 1290 / NCIMB 6125 / NCTC 8237 / Type A).